The following is a 1072-amino-acid chain: Carbamoyl phosphate synthase large chain (1072 aa).

The carboxyphosphate synthetic domain stretch occupies residues 1–401 (MPKRLDINTI…SLLKAVRSLE (401 aa)). ATP-binding residues include Arg-129, Arg-169, Gly-175, Gly-176, Lys-208, Ile-210, Glu-215, Gly-241, Val-242, His-243, Gln-284, and Glu-298. Residues 133-327 (RTLMQDLNEP…IAKLAAKIAV (195 aa)) enclose the ATP-grasp 1 domain. Residues Gln-284, Glu-298, and Asn-300 each contribute to the Mg(2+) site. Mn(2+)-binding residues include Gln-284, Glu-298, and Asn-300. The segment at 402 to 546 (LGIYHLELDH…YSTYADENES (145 aa)) is oligomerization domain. The carbamoyl phosphate synthetic domain stretch occupies residues 547 to 929 (IVTDRKSVVV…ALYKGLVASG (383 aa)). One can recognise an ATP-grasp 2 domain in the interval 671–861 (EAALTKLGIP…MANVATKVIL (191 aa)). 9 residues coordinate ATP: Arg-707, Arg-746, Glu-752, Gly-777, Val-778, His-779, Ser-780, Gln-820, and Glu-832. Mg(2+)-binding residues include Gln-820, Glu-832, and Asn-834. Mn(2+)-binding residues include Gln-820, Glu-832, and Asn-834. In terms of domain architecture, MGS-like spans 930–1072 (INIPTHGSVI…QTKRHEVVHA (143 aa)). The interval 930-1072 (INIPTHGSVI…QTKRHEVVHA (143 aa)) is allosteric domain.

It belongs to the CarB family. Composed of two chains; the small (or glutamine) chain promotes the hydrolysis of glutamine to ammonia, which is used by the large (or ammonia) chain to synthesize carbamoyl phosphate. Tetramer of heterodimers (alpha,beta)4. It depends on Mg(2+) as a cofactor. The cofactor is Mn(2+).

It carries out the reaction hydrogencarbonate + L-glutamine + 2 ATP + H2O = carbamoyl phosphate + L-glutamate + 2 ADP + phosphate + 2 H(+). It catalyses the reaction hydrogencarbonate + NH4(+) + 2 ATP = carbamoyl phosphate + 2 ADP + phosphate + 2 H(+). The protein operates within amino-acid biosynthesis; L-arginine biosynthesis; carbamoyl phosphate from bicarbonate: step 1/1. It functions in the pathway pyrimidine metabolism; UMP biosynthesis via de novo pathway; (S)-dihydroorotate from bicarbonate: step 1/3. Large subunit of the glutamine-dependent carbamoyl phosphate synthetase (CPSase). CPSase catalyzes the formation of carbamoyl phosphate from the ammonia moiety of glutamine, carbonate, and phosphate donated by ATP, constituting the first step of 2 biosynthetic pathways, one leading to arginine and/or urea and the other to pyrimidine nucleotides. The large subunit (synthetase) binds the substrates ammonia (free or transferred from glutamine from the small subunit), hydrogencarbonate and ATP and carries out an ATP-coupled ligase reaction, activating hydrogencarbonate by forming carboxy phosphate which reacts with ammonia to form carbamoyl phosphate. The sequence is that of Carbamoyl phosphate synthase large chain from Bacillus cereus (strain B4264).